Reading from the N-terminus, the 141-residue chain is Large ribosomal subunit protein uL11 (141 aa).

This sequence belongs to the universal ribosomal protein uL11 family. As to quaternary structure, part of the ribosomal stalk of the 50S ribosomal subunit. Interacts with L10 and the large rRNA to form the base of the stalk. L10 forms an elongated spine to which L12 dimers bind in a sequential fashion forming a multimeric L10(L12)X complex. One or more lysine residues are methylated.

Its function is as follows. Forms part of the ribosomal stalk which helps the ribosome interact with GTP-bound translation factors. The protein is Large ribosomal subunit protein uL11 of Prochlorococcus marinus (strain MIT 9211).